Reading from the N-terminus, the 1032-residue chain is Protein phosphatase 1 regulatory subunit 12A (1032 aa).

Positions 35 to 38 (KVKF) match the KVKF motif motif. ANK repeat units follow at residues 39–68 (DDGA…DINY), 72–101 (DGLT…NINQ), 105–134 (EGWI…HVGA), 138–164 (EGDT…RQGV), 198–227 (SGGT…DVNI), and 231–260 (DGWT…DMET). Asparagine 67 and asparagine 100 each carry (3S)-3-hydroxyasparagine; by HIF1AN. Asparagine 226 is modified ((3S)-3-hydroxyasparagine; by HIF1AN). Disordered regions lie at residues 290–553 (LHSE…HRSC) and 588–928 (SSTS…RLEK). Positions 291–300 (HSEKRDKKSP) are enriched in basic and acidic residues. Phosphoserine is present on serine 299. Over residues 302-316 (IESTANMENNQPQKT) the composition is skewed to polar residues. The span at 318 to 340 (KNKETLIIEPEKNASRIESLEQE) shows a compositional bias: basic and acidic residues. Over residues 357-369 (SEEDEEDDSESEA) the composition is skewed to acidic residues. Over residues 383-399 (AHTASTQAAPAAVTTPT) the composition is skewed to low complexity. Residues 400 to 421 (LSSNQGTPTSPVKKFPTSTTKI) show a composition bias toward polar residues. 2 positions are modified to phosphoserine: serine 422 and serine 432. Positions 422-432 (SPKEEERKDES) are enriched in basic and acidic residues. A Phosphothreonine modification is found at threonine 443. At serine 445 the chain carries Phosphoserine. Tyrosine 446 bears the Phosphotyrosine mark. Positions 469–480 (RSASSPRLSSSL) are enriched in low complexity. Residue serine 472 is modified to Phosphoserine; by NUAK1. Residue serine 473 is modified to Phosphoserine; by CDK1. Serine 477 is subject to Phosphoserine. A compositionally biased stretch (basic and acidic residues) spans 481–491 (DNKEKEKDNKG). A phosphoserine mark is found at serine 507 and serine 509. Residues 540–551 (NSSINEGSTYHR) show a composition bias toward polar residues. Serine 601 carries the post-translational modification Phosphoserine. Residues 602 to 612 (PAGTQSSTSNR) show a composition bias toward polar residues. Residues 614 to 625 (WAEDSTEKEKDS) show a composition bias toward basic and acidic residues. The residue at position 618 (serine 618) is a Phosphoserine. Residues 633 to 661 (LVAPTVVSAAASSTTALTTTTAGTLSSTS) are compositionally biased toward low complexity. Residues 674-683 (VRDEESESQR) show a composition bias toward basic and acidic residues. Positions 683–866 (RKARSRQARQ…VSFWTQDSDE (184 aa)) are interaction with ROCK2. Basic residues predominate over residues 684-694 (KARSRQARQSR). Phosphoserine; by PKA and PKG; in vitro is present on residues serine 693 and serine 696. Residue threonine 697 is modified to Phosphothreonine; by ROCK1, ROCK2, CDC42BP, ZIPK/DAPK3 and RAF1. Residues 719–768 (RTREQENEEKDKEEKEKQDKEKQEEKKESEVSREDEYKQKYSRTYDETYA) are compositionally biased toward basic and acidic residues. Over residues 774–797 (STSSSSTPSSSSLSTLGSSLYASS) the composition is skewed to low complexity. Positions 798 to 812 (QLNRPNSLVGITSAY) are enriched in polar residues. At serine 804 the chain carries Phosphoserine. Basic and acidic residues predominate over residues 816-842 (LTKDNEREGEKKEEEKEGEDKSQPKSI). A compositionally biased stretch (basic residues) spans 843–854 (RERRRPREKRRS). The residue at position 854 (serine 854) is a Phosphoserine; by ROCK2. 2 positions are modified to phosphoserine: serine 864 and serine 873. Residues 869-885 (QERQSDTEDGSSKRDTQ) show a composition bias toward basic and acidic residues. A compositionally biased stretch (low complexity) spans 886–900 (TDSVSRYDSSSTSSS). 2 positions are modified to phosphoserine: serine 905 and serine 910. At serine 912 the chain carries Phosphoserine; by NUAK1. Positions 916–928 (LEERKPYGSRLEK) are enriched in basic and acidic residues. Position 997 is a phosphoserine (serine 997).

PP1 comprises a catalytic subunit, PPP1CA, PPP1CB or PPP1CC, and one or several targeting or regulatory subunits. PPP1R12A mediates binding to myosin. Interacts with ARHA and CIT. Binds PPP1R12B, ROCK1 and IL16. Interacts directly with PRKG1. Non-covalent dimer of 2 dimers; PRKG1-PRKG1 and PPP1R12A-PPP1R12A. Interacts with SMTNL1. Interacts with PPP1CB; the interaction is direct. Interacts (when phosphorylated at Ser-445, Ser-472 and Ser-910) with 14-3-3. Interacts with ROCK1 and ROCK2. Interacts with isoform 1 and isoform 2 of ZIPK/DAPK3. Interacts with RAF1. Interacts with HIF1AN. Interacts with NCKAP1L. In terms of processing, phosphorylated on upon DNA damage, probably by ATM or ATR. Phosphorylated by CIT (Rho-associated kinase). Phosphorylated cooperatively by ROCK1 and CDC42BP on Thr-697. In vitro, phosphorylation of Ser-696 by PKA and PKG appears to prevent phosphorylation of the inhibitory site Thr-697, probably mediated by PRKG1. May be phosphorylated at Thr-697 by DMPK; may inhibit the myosin phosphatase activity. Phosphorylated at Ser-473 by CDK1 during mitosis, creating docking sites for the POLO box domains of PLK1. Subsequently, PLK1 binds and phosphorylates PPP1R12A. As to expression, smooth muscle. Detected in aorta, portal vein, stomach, intestine, bladder and lung.

Its subcellular location is the cytoplasm. The protein resides in the cytoskeleton. The protein localises to the stress fiber. In terms of biological role, key regulator of protein phosphatase 1C (PPP1C). Mediates binding to myosin. As part of the PPP1C complex, involved in dephosphorylation of PLK1. Capable of inhibiting HIF1AN-dependent suppression of HIF1A activity. The chain is Protein phosphatase 1 regulatory subunit 12A from Rattus norvegicus (Rat).